The primary structure comprises 157 residues: Protein-export protein SecB (157 aa).

This sequence belongs to the SecB family. As to quaternary structure, homotetramer, a dimer of dimers. One homotetramer interacts with 1 SecA dimer.

The protein resides in the cytoplasm. In terms of biological role, one of the proteins required for the normal export of preproteins out of the cell cytoplasm. It is a molecular chaperone that binds to a subset of precursor proteins, maintaining them in a translocation-competent state. It also specifically binds to its receptor SecA. The polypeptide is Protein-export protein SecB (Shewanella oneidensis (strain ATCC 700550 / JCM 31522 / CIP 106686 / LMG 19005 / NCIMB 14063 / MR-1)).